Reading from the N-terminus, the 295-residue chain is 4-hydroxy-tetrahydrodipicolinate synthase (295 aa).

Residue Thr-48 participates in pyruvate binding. Tyr-136 (proton donor/acceptor) is an active-site residue. Lys-164 acts as the Schiff-base intermediate with substrate in catalysis. Ile-206 is a pyruvate binding site.

This sequence belongs to the DapA family. Homotetramer; dimer of dimers.

The protein localises to the cytoplasm. It carries out the reaction L-aspartate 4-semialdehyde + pyruvate = (2S,4S)-4-hydroxy-2,3,4,5-tetrahydrodipicolinate + H2O + H(+). It functions in the pathway amino-acid biosynthesis; L-lysine biosynthesis via DAP pathway; (S)-tetrahydrodipicolinate from L-aspartate: step 3/4. Functionally, catalyzes the condensation of (S)-aspartate-beta-semialdehyde [(S)-ASA] and pyruvate to 4-hydroxy-tetrahydrodipicolinate (HTPA). The protein is 4-hydroxy-tetrahydrodipicolinate synthase of Actinobacillus pleuropneumoniae serotype 5b (strain L20).